We begin with the raw amino-acid sequence, 285 residues long: Ribosomal RNA small subunit methyltransferase A (285 aa).

S-adenosyl-L-methionine contacts are provided by asparagine 11, leucine 13, glycine 37, glutamate 57, aspartate 85, and asparagine 105.

This sequence belongs to the class I-like SAM-binding methyltransferase superfamily. rRNA adenine N(6)-methyltransferase family. RsmA subfamily.

The protein localises to the cytoplasm. It carries out the reaction adenosine(1518)/adenosine(1519) in 16S rRNA + 4 S-adenosyl-L-methionine = N(6)-dimethyladenosine(1518)/N(6)-dimethyladenosine(1519) in 16S rRNA + 4 S-adenosyl-L-homocysteine + 4 H(+). Its function is as follows. Specifically dimethylates two adjacent adenosines (A1518 and A1519) in the loop of a conserved hairpin near the 3'-end of 16S rRNA in the 30S particle. May play a critical role in biogenesis of 30S subunits. This Campylobacter curvus (strain 525.92) protein is Ribosomal RNA small subunit methyltransferase A.